Reading from the N-terminus, the 207-residue chain is Histone H1 (207 aa).

The segment covering 1 to 15 (MAEVAPAPAAAAPAK) has biased composition (low complexity). Disordered regions lie at residues 1–28 (MAEV…PKKA) and 105–207 (EAKK…PKKK). The residue at position 2 (Ala-2) is an N-acetylalanine. The span at 16 to 27 (APKKKAAAKPKK) shows a compositional bias: basic residues. One can recognise an H15 domain in the interval 28 to 101 (AGPSVGELIV…GASGSFKLNK (74 aa)). Composition is skewed to basic residues over residues 117 to 168 (KAKK…KVKK) and 175 to 207 (KAAK…PKKK).

The protein belongs to the histone H1/H5 family. As to expression, oncorhyncin II is expressed in skin.

It is found in the nucleus. It localises to the chromosome. The protein localises to the secreted. Its function is as follows. Histones H1 are necessary for the condensation of nucleosome chains into higher-order structures. Oncorhyncin II has antibacterial activity against Gram-positive and Gram-negative bacteria at submicromolar concentrations. Potentially important role in mucosal defense. The chain is Histone H1 from Oncorhynchus mykiss (Rainbow trout).